A 157-amino-acid polypeptide reads, in one-letter code: MQLTVKALQGRECSLQVPEDELVSTLKQLVSEKLNVPVRQQRLLFKGKALADGKRLSDYSIGPNSKLNLVVKPLEKVLLEEGEAQRLADSPPPQVWQLISKVLARHFSAADASRVLEQPQRDYERSLSRLTLDDIERLASRFLHPEVTETMEKGFSK.

The Ubiquitin-like domain occupies 1 to 76 (MQLTVKALQG…LNLVVKPLEK (76 aa)). A Glycyl lysine isopeptide (Lys-Gly) (interchain with G-Cter in ubiquitin) cross-link involves residue lysine 48. A Phosphoserine modification is found at serine 90. Residues 96-138 (WQLISKVLARHFSAADASRVLEQPQRDYERSLSRLTLDDIERL) are required and sufficient for interaction with BAG6.

As to quaternary structure, component of the BAG6/BAT3 complex, at least composed of BAG6, UBL4A and GET4/TRC35. Interacts with BAG6; the interaction is direct and required for UBL4A protein stability. Interacts with USP13; may be indirect via BAG6. In terms of processing, polyubiquitinated. Ubiquitination by AMFR and deubiquitination by USP13 may regulate the interaction between the BAG6/BAT complex and SGTA and therefore may regulate client proteins fate.

It localises to the cytoplasm. The protein resides in the cytosol. The protein localises to the nucleus. Functionally, as part of a cytosolic protein quality control complex, the BAG6/BAT3 complex, maintains misfolded and hydrophobic patches-containing proteins in a soluble state and participates in their proper delivery to the endoplasmic reticulum or alternatively can promote their sorting to the proteasome where they undergo degradation. The BAG6/BAT3 complex is involved in the post-translational delivery of tail-anchored/type II transmembrane proteins to the endoplasmic reticulum membrane. Recruited to ribosomes, it interacts with the transmembrane region of newly synthesized tail-anchored proteins and together with SGTA and ASNA1 mediates their delivery to the endoplasmic reticulum. Client proteins that cannot be properly delivered to the endoplasmic reticulum are ubiquitinated and sorted to the proteasome. Similarly, the BAG6/BAT3 complex also functions as a sorting platform for proteins of the secretory pathway that are mislocalized to the cytosol either delivering them to the proteasome for degradation or to the endoplasmic reticulum. The BAG6/BAT3 complex also plays a role in the endoplasmic reticulum-associated degradation (ERAD), a quality control mechanism that eliminates unwanted proteins of the endoplasmic reticulum through their retrotranslocation to the cytosol and their targeting to the proteasome. It maintains these retrotranslocated proteins in an unfolded yet soluble state condition in the cytosol to ensure their proper delivery to the proteasome. The sequence is that of Ubiquitin-like protein 4A (UBL4A) from Pongo abelii (Sumatran orangutan).